We begin with the raw amino-acid sequence, 312 residues long: Taste receptor type 2 member 135 (312 aa).

Over 1–19 (MSTGHTVLGCQTTDKTVVT) the chain is Extracellular. The helical transmembrane segment at 20–40 (LFIILVLLCLVAVVGNGFIII) threads the bilayer. Residues 41 to 66 (ALGMKWLLRRTLSAHNKLLISLAASR) are Cytoplasmic-facing. Residues 67–87 (FCLQCVVIGKNIYVFLNPTSF) form a helical membrane-spanning segment. The Extracellular segment spans residues 88 to 97 (PYNPVIQLLN). The helical transmembrane segment at 98 to 118 (LMWDFLTAATIWLCSLLGFFY) threads the bilayer. The Cytoplasmic segment spans residues 119–140 (CVKIATLTHPVFVWLKYRLPGW). The chain crosses the membrane as a helical span at residues 141–161 (VPWMLLSAVGMSSLTSILCFI). Topologically, residues 162 to 198 (GNYMIYQNHAKSGHQPWNVTGNSLRHSLEKFYFFSIK) are extracellular. Asparagine 179 carries an N-linked (GlcNAc...) asparagine glycan. Residues 199–219 (IIMWTIPTVVFSIFMSLLLVS) form a helical membrane-spanning segment. The Cytoplasmic segment spans residues 220–244 (LVRHMKKTFLALSELRDVWAQAHFK). The chain crosses the membrane as a helical span at residues 245–265 (ALLPLLSFIVLFISCFLTLVL). Topologically, residues 266–277 (SSASNTPYQEFR) are extracellular. Residues 278-298 (YWMWQVVIHLCTVIHPIVILF) form a helical membrane-spanning segment. Residues 299–312 (SNPVLRVVIKRGCC) are Cytoplasmic-facing.

The protein belongs to the G-protein coupled receptor T2R family.

The protein resides in the membrane. Its function is as follows. Putative taste receptor which may play a role in the perception of bitterness. This chain is Taste receptor type 2 member 135 (Tas2r135), found in Mus musculus (Mouse).